Reading from the N-terminus, the 213-residue chain is Uridine kinase (213 aa).

Residue 12–19 (GGSCSGKT) coordinates ATP.

Belongs to the uridine kinase family.

It is found in the cytoplasm. It catalyses the reaction uridine + ATP = UMP + ADP + H(+). The enzyme catalyses cytidine + ATP = CMP + ADP + H(+). It functions in the pathway pyrimidine metabolism; CTP biosynthesis via salvage pathway; CTP from cytidine: step 1/3. Its pathway is pyrimidine metabolism; UMP biosynthesis via salvage pathway; UMP from uridine: step 1/1. The chain is Uridine kinase (udk) from Mycoplasma genitalium (strain ATCC 33530 / DSM 19775 / NCTC 10195 / G37) (Mycoplasmoides genitalium).